The primary structure comprises 1377 residues: DNA-directed RNA polymerase subunit beta' (1377 aa).

Zn(2+)-binding residues include Cys60, Cys62, Cys75, and Cys78. Residues Asp449, Asp451, and Asp453 each coordinate Mg(2+). Zn(2+) contacts are provided by Cys777, Cys851, Cys858, and Cys861.

Belongs to the RNA polymerase beta' chain family. The RNAP catalytic core consists of 2 alpha, 1 beta, 1 beta' and 1 omega subunit. When a sigma factor is associated with the core the holoenzyme is formed, which can initiate transcription. Requires Mg(2+) as cofactor. It depends on Zn(2+) as a cofactor.

It carries out the reaction RNA(n) + a ribonucleoside 5'-triphosphate = RNA(n+1) + diphosphate. Functionally, DNA-dependent RNA polymerase catalyzes the transcription of DNA into RNA using the four ribonucleoside triphosphates as substrates. In Borrelia hermsii (strain HS1 / DAH), this protein is DNA-directed RNA polymerase subunit beta'.